We begin with the raw amino-acid sequence, 676 residues long: Envelope glycoprotein (676 aa).

Residues M1–S32 form the signal peptide. Residues I33 to Q650 lie on the Extracellular side of the membrane. N-linked (GlcNAc...) asparagine; by host glycosylation occurs at N40. 5 disulfide bridges follow: C53/C609, C108/C135, C121/C147, C511/C556, and C601/C608. A receptor-binding region spans residues R54–E201. N-linked (GlcNAc...) asparagine; by host glycans are attached at residues N204, N228, N238, N257, N268, N296, N317, N333, N346, N386, and N413. The tract at residues E305–T485 is mucin-like region. A compositionally biased stretch (polar residues) spans R314–T335. Residues R314–E337 form a disordered region. The segment at T370 to K478 is disordered. Residues D414–A427 are compositionally biased toward low complexity. N436, N454, and N462 each carry an N-linked (GlcNAc...) asparagine; by host glycan. Polar residues predominate over residues A447 to T464. The fusion peptide stretch occupies residues G524–A539. Residues L554 to Q595 adopt a coiled-coil conformation. N563 is a glycosylation site (N-linked (GlcNAc...) asparagine; by host). Positions W615 to T634 form a coiled coil. N-linked (GlcNAc...) asparagine; by host glycosylation is present at N618. A helical transmembrane segment spans residues W651–I671. S-palmitoyl cysteine; by host attachment occurs at residues C670 and C672. Over C672–F676 the chain is Cytoplasmic.

It belongs to the filoviruses glycoprotein family. As to quaternary structure, homotrimer; each monomer consists of a GP1 and a GP2 subunit linked by disulfide bonds. The resulting peplomers (GP1,2) protrude from the virus surface as spikes. Interacts with host integrin alpha-V/ITGAV. Interacts with host CLEC10A. Binds also to host CD209 and CLEC4M/DC-SIGN(R). Interacts with host FOLR1. Interacts with BST2; this interaction inhibits the antiviral effect of BST2 and this allows viral release from infected cells. Interacts with host FCN1; this interaction enhances viral entry. Interacts with host TLR4; this interaction induces cell death in T-lymphocytes or proinflammatory cytokines and SOCS1 production in monocytes. Interacts with host entry receptor NPC1. In terms of assembly, GP1 and GP2delta are part of GP1,2delta soluble complexes released by ectodomain shedding. Post-translationally, the signal peptide region modulates GP's high mannose glycosylation, thereby determining the efficiency of the interactions with DC-SIGN(R). N-glycosylated. In terms of processing, O-glycosylated in the mucin-like region. Post-translationally, palmitoylation of GP2 is not required for its function. Specific enzymatic cleavages in vivo yield mature proteins. The precursor is processed into GP1 and GP2 by host cell furin in the trans Golgi, and maybe by other host proteases, to yield the mature GP1 and GP2 proteins. The cleavage site corresponds to the furin optimal cleavage sequence [KR]-X-[KR]-R. This cleavage does not seem to be required for function. After the internalization of the virus into cell endosomes, GP1 C-terminus is removed by the endosomal proteases cathepsin B, cathepsin L, or both, leaving a 19-kDa N-terminal fragment which is further digested by cathepsin B. Proteolytic processing of GP1,2 by host ADAM17 can remove the transmembrane anchor of GP2 and leads to shedding of complexes consisting in GP1 and truncated GP2 (GP1,2delta).

It is found in the virion membrane. It localises to the host cell membrane. Its subcellular location is the secreted. In terms of biological role, trimeric GP1,2 complexes form the virion surface spikes and mediate the viral entry processes, with GP1 acting as the receptor-binding subunit and GP2 as the membrane fusion subunit. At later times of infection, down-regulates the expression of various host cell surface molecules that are essential for immune surveillance and cell adhesion. Down-modulates several integrins including ITGA1, ITGA2, ITGA3, ITGA4, ITGA5, ITGA6, ITGAV and ITGB1. This decrease in cell adhesion molecules may lead to cell detachment, contributing to the disruption of blood vessel integrity and hemorrhages developed during infection (cytotoxicity). Interacts with host TLR4 and thereby stimulates the differentiation and activation of monocytes leading to bystander death of T-lymphocytes. Down-regulates as well the function of host natural killer cells. Counteracts the antiviral effect of host BST2/tetherin that restricts release of progeny virions from infected cells. However, cooperates with VP40 and host BST2 to activate canonical NF-kappa-B pathway in a manner dependent on neddylation. Functions as a decoy for anti-GP1,2 antibodies thereby contributing to viral immune evasion. Interacts and activates host macrophages and dendritic cells inducing up-regulation of cytokine transcription. This effect is mediated throught activation of host TLR4. Its function is as follows. Responsible for binding to the receptor(s) on target cells. Interacts with CD209/DC-SIGN and CLEC4M/DC-SIGNR which act as cofactors for virus entry into dendritic cells (DCs) and endothelial cells. Binding to the macrophage specific lectin CLEC10A also seems to enhance virus infectivity. Interaction with FOLR1/folate receptor alpha may be a cofactor for virus entry in some cell types, although results are contradictory. Members of the Tyro3 receptor tyrosine kinase family also seem to be cell entry factors in filovirus infection. Once attached, the virions are internalized through clathrin-dependent endocytosis and/or macropinocytosis. After internalization of the virus into the endosomes of the host cell, proteolysis of GP1 by two cysteine proteases, CTSB/cathepsin B and CTSL/cathepsin L removes the glycan cap and allows GP1 binding to the host entry receptor NPC1. NPC1-binding, Ca(2+) and acidic pH induce a conformational change of GP2, which unmasks its fusion peptide and permit membranes fusion. Functionally, acts as a class I viral fusion protein. Under the current model, the protein has at least 3 conformational states: pre-fusion native state, pre-hairpin intermediate state, and post-fusion hairpin state. During viral and target cell membrane fusion, the coiled coil regions (heptad repeats) assume a trimer-of-hairpins structure, positioning the fusion peptide in close proximity to the C-terminal region of the ectodomain. The formation of this structure appears to drive apposition and subsequent fusion of viral and target cell membranes. Responsible for penetration of the virus into the cell cytoplasm by mediating the fusion of the membrane of the endocytosed virus particle with the endosomal membrane. Low pH in endosomes induces an irreversible conformational change in GP2, releasing the fusion hydrophobic peptide. This chain is Envelope glycoprotein (GP), found in Zaire ebolavirus (strain Kikwit-95) (ZEBOV).